A 479-amino-acid chain; its full sequence is Cyclin-dependent kinase F-1 (479 aa).

The Protein kinase domain maps to 24–419 (YEVLGRAGSG…AADLLNDPYF (396 aa)). ATP is bound by residues 30–38 (AGSGAYADV) and Lys-53. Catalysis depends on Asp-146, which acts as the Proton acceptor. Thr-291 carries the phosphothreonine modification. The tract at residues 429-479 (EGLQVPESKDEDDDSTEEWANFRGGDSDSDFDEFGSMDVTKTDKGFSIRFS) is disordered. Basic and acidic residues predominate over residues 468-479 (TKTDKGFSIRFS).

Belongs to the protein kinase superfamily. CMGC Ser/Thr protein kinase family. CDC2/CDKX subfamily.

It carries out the reaction L-seryl-[protein] + ATP = O-phospho-L-seryl-[protein] + ADP + H(+). It catalyses the reaction L-threonyl-[protein] + ATP = O-phospho-L-threonyl-[protein] + ADP + H(+). The catalysed reaction is [DNA-directed RNA polymerase] + ATP = phospho-[DNA-directed RNA polymerase] + ADP + H(+). The chain is Cyclin-dependent kinase F-1 (CDKF-1) from Oryza sativa subsp. japonica (Rice).